The chain runs to 327 residues: Gibberellin 2-beta-dioxygenase 1 (327 aa).

In terms of domain architecture, Fe2OG dioxygenase spans 171–276 (QSDCLFRVNH…RLSMIYFCGP (106 aa)). Fe cation-binding residues include histidine 200, aspartate 202, and histidine 257. Residue arginine 267 is part of the active site.

Belongs to the iron/ascorbate-dependent oxidoreductase family. GA2OX subfamily. Fe cation is required as a cofactor. As to expression, predominantly expressed in roots, flowers, young fruits and seeds.

It catalyses the reaction gibberellin A1 + 2-oxoglutarate + O2 = gibberellin A8 + succinate + CO2. Its pathway is plant hormone biosynthesis; gibberellin biosynthesis. In terms of biological role, catalyzes the 2-beta-hydroxylation of several biologically active gibberellins, leading to the homeostatic regulation of their endogenous level. Catabolism of gibberellins (GAs) plays a central role in plant development. Converts GA9/GA20 to GA51/GA29 and GA4/GA1 to GA34/GA8. The polypeptide is Gibberellin 2-beta-dioxygenase 1 (GA2OX1) (Pisum sativum (Garden pea)).